The primary structure comprises 94 residues: Small ribosomal subunit protein uS19 (94 aa).

Belongs to the universal ribosomal protein uS19 family.

In terms of biological role, protein S19 forms a complex with S13 that binds strongly to the 16S ribosomal RNA. The protein is Small ribosomal subunit protein uS19 of Pelotomaculum thermopropionicum (strain DSM 13744 / JCM 10971 / SI).